The chain runs to 681 residues: Transcriptional regulator prz1 (681 aa).

A compositionally biased stretch (basic and acidic residues) spans 1 to 15; it reads MERQRSEEANRRFKD. Disordered regions lie at residues 1 to 29, 66 to 96, 340 to 372, 410 to 433, and 520 to 563; these read MERQRSEEANRRFKDLNPSSLYDNLSKPD, NPSKNNIQHLHPNTSEPFKTSSKSDEYDSYP, SHQSSPYLVPNSGRTLNSENARESTIRSVNSPF, PQINVVPSSPSKSQSGPSLPANPL, and KIEN…AKSE. Composition is skewed to polar residues over residues 66 to 86 and 340 to 358; these read NPSKNNIQHLHPNTSEPFKTS and SHQSSPYLVPNSGRTLNSE. Low complexity predominate over residues 416 to 428; that stretch reads PSSPSKSQSGPSL. Residues 528–549 are compositionally biased toward polar residues; it reads SNDYLSVRNTRPRSRSLNSLVG. Ser543 and Ser546 each carry phosphoserine. A compositionally biased stretch (low complexity) spans 550–559; it reads NKSENSSSSK. C2H2-type zinc fingers lie at residues 570-594 and 600-622; these read YVCTFAGCNKRFTRAYNLKSHMNTH and FQCSICKKSFARQHDKRRHEQLH. The segment at 628 to 650 adopts a C2H2-type 3; degenerate zinc-finger fold; it reads FACVTCNQRFARMDALNRHYKSE. Positions 662 to 681 are disordered; sequence RGIQVPPSRKTAVASTSKQK.

The protein belongs to the EGR C2H2-type zinc-finger protein family. In terms of processing, phosphorylated. Dephosphorylated by calcineurin which leads to rapid translocation from the cytoplasm to the nucleus.

It is found in the nucleus. It localises to the cytoplasm. Its function is as follows. Involved in the regulation of calcium ion homeostasis. Binds to the calcineurin-dependent response element. Transcriptionally regulates pmc1. This Schizosaccharomyces pombe (strain 972 / ATCC 24843) (Fission yeast) protein is Transcriptional regulator prz1 (prz1).